Consider the following 302-residue polypeptide: tRNA dimethylallyltransferase (302 aa).

10 to 17 (GPTATGKS) is a binding site for ATP. Substrate is bound at residue 12–17 (TATGKS). The tract at residues 35–38 (DSRQ) is interaction with substrate tRNA.

Belongs to the IPP transferase family. In terms of assembly, monomer. Mg(2+) serves as cofactor.

It carries out the reaction adenosine(37) in tRNA + dimethylallyl diphosphate = N(6)-dimethylallyladenosine(37) in tRNA + diphosphate. Functionally, catalyzes the transfer of a dimethylallyl group onto the adenine at position 37 in tRNAs that read codons beginning with uridine, leading to the formation of N6-(dimethylallyl)adenosine (i(6)A). The sequence is that of tRNA dimethylallyltransferase from Acaryochloris marina (strain MBIC 11017).